An 87-amino-acid polypeptide reads, in one-letter code: UPF0235 protein TGRD_618 (87 aa).

It belongs to the UPF0235 family.

This chain is UPF0235 protein TGRD_618, found in Endomicrobium trichonymphae.